Reading from the N-terminus, the 264-residue chain is MRIALGISYSGSAYEGWQSQLSGKTVQDKLELALSRFAVQPIRVMCAGRTDAGVHALMQVVHFDTPLQRETSSWVRGTNAFLPSDIAVQWAQPVPDEFHSRASAIARRYAYVVLESPVRPSVEAGRVGWVYRPLDGDAMRQAALHLMGEHDFSSFRAAQCQAKSPVKTMSRIEISQRAGPGSRYWRFEFEANAFLHHMIRNIMGCLLAIGQGNHPPEWLAEVVAARRRDAAAPTFSPDGLYFLGPVYEERHGLPSRTAAYDWLP.

D51 (nucleophile) is an active-site residue. Y109 contacts substrate.

The protein belongs to the tRNA pseudouridine synthase TruA family. Homodimer.

It catalyses the reaction uridine(38/39/40) in tRNA = pseudouridine(38/39/40) in tRNA. Its function is as follows. Formation of pseudouridine at positions 38, 39 and 40 in the anticodon stem and loop of transfer RNAs. In Polaromonas naphthalenivorans (strain CJ2), this protein is tRNA pseudouridine synthase A.